The chain runs to 273 residues: Ribosomal RNA small subunit methyltransferase A (273 aa).

S-adenosyl-L-methionine contacts are provided by N18, L20, G45, E66, D91, and N113.

The protein belongs to the class I-like SAM-binding methyltransferase superfamily. rRNA adenine N(6)-methyltransferase family. RsmA subfamily.

The protein resides in the cytoplasm. The catalysed reaction is adenosine(1518)/adenosine(1519) in 16S rRNA + 4 S-adenosyl-L-methionine = N(6)-dimethyladenosine(1518)/N(6)-dimethyladenosine(1519) in 16S rRNA + 4 S-adenosyl-L-homocysteine + 4 H(+). Functionally, specifically dimethylates two adjacent adenosines (A1518 and A1519) in the loop of a conserved hairpin near the 3'-end of 16S rRNA in the 30S particle. May play a critical role in biogenesis of 30S subunits. The polypeptide is Ribosomal RNA small subunit methyltransferase A (Escherichia coli O81 (strain ED1a)).